A 385-amino-acid chain; its full sequence is Initiation-specific alpha-1,6-mannosyltransferase (385 aa).

The Cytoplasmic portion of the chain corresponds to 1–15; the sequence is MLQLREPQMVHKHLK. Residues 16 to 36 form a helical; Signal-anchor for type II membrane protein membrane-spanning segment; sequence LAVLGIVVIFTTYFIISSLSS. The Lumenal segment spans residues 37–385; that stretch reads PTSTHKTEYN…KDDGMPEMEQ (349 aa). The DXD motif signature appears at 189–191; the sequence is DID.

It belongs to the glycosyltransferase 32 family. Requires Mn(2+) as cofactor.

The protein localises to the endoplasmic reticulum membrane. It localises to the golgi apparatus membrane. The catalysed reaction is Transfers an alpha-D-mannosyl residue from GDP-mannose into lipid-linked oligosaccharide, forming an alpha-(1-&gt;6)-D-mannosyl-D-mannose linkage.. Its function is as follows. Mannosyltransferase involved in outer chain elongation of asparagine-linked oligosaccharides of the type Man(9)GlcNAc(2). Adds the first alpha-1,6-mannose to the Man(8)GlcNAc(2) and Man(9)GlcNAc(2), but not Man(5)GlcNAc(2), endoplasmic reticulum intermediates. Represents the first enzymatic event required for synthesis of outer chain mannose linkages on yeast secretory proteins. N-glycan outer chain epitopes play a crucial role in the host-fungal interaction, virulence, and host immune response such as interleukin synthesis or phagocytosis by neutrophils. The chain is Initiation-specific alpha-1,6-mannosyltransferase from Candida albicans (strain SC5314 / ATCC MYA-2876) (Yeast).